A 273-amino-acid polypeptide reads, in one-letter code: 2-dehydro-3-deoxyphosphooctonate aldolase (273 aa).

It belongs to the KdsA family.

The protein localises to the cytoplasm. It catalyses the reaction D-arabinose 5-phosphate + phosphoenolpyruvate + H2O = 3-deoxy-alpha-D-manno-2-octulosonate-8-phosphate + phosphate. Its pathway is carbohydrate biosynthesis; 3-deoxy-D-manno-octulosonate biosynthesis; 3-deoxy-D-manno-octulosonate from D-ribulose 5-phosphate: step 2/3. It participates in bacterial outer membrane biogenesis; lipopolysaccharide biosynthesis. This is 2-dehydro-3-deoxyphosphooctonate aldolase from Citrifermentans bemidjiense (strain ATCC BAA-1014 / DSM 16622 / JCM 12645 / Bem) (Geobacter bemidjiensis).